The following is a 962-amino-acid chain: SH3 domain-binding protein 4 (962 aa).

In terms of domain architecture, SH3 1 spans 55–114 (GNAKEVIAIKDYCPNNFTTLKFSKGDHLYVLDTSGGEWWYAHNTTEMGYIPSSYVQPLNY). Phosphoserine occurs at positions 131, 245, 250, 278, and 295. Residues 316–453 (TNIVCKLDSS…LEPCMYLAIV (138 aa)) form the ZU5 domain. S636 carries the phosphoserine modification. The region spanning 653 to 723 (SSLKFGKLLK…HTKNVLVVGK (71 aa)) is the SH3 2 domain.

Homodimer or homooligomer. Interacts with DNM2, EPS15, clathrin, the adapter protein complex 2/AP-2 and TFRC. Interacts with the Rag GTPases RRAGA, RRAGB, RRAGC and RRAGD; the interaction is most probably direct, preferentially occurs with their inactive GDP-bound form and is negatively regulated by amino acids. In terms of processing, phosphorylated upon EGF stimulation. Phosphorylation prevents interaction with DNM2.

The protein localises to the membrane. Its subcellular location is the clathrin-coated pit. It is found in the cytoplasmic vesicle. It localises to the clathrin-coated vesicle. The protein resides in the nucleus. Its function is as follows. May function in transferrin receptor internalization at the plasma membrane through a cargo-specific control of clathrin-mediated endocytosis. Alternatively, may act as a negative regulator of the amino acid-induced TOR signaling by inhibiting the formation of active Rag GTPase complexes. Preferentially binds inactive Rag GTPase complexes and prevents their interaction with the mTORC1 complex inhibiting its relocalization to lysosomes and its activation. Thereby, may indirectly regulate cell growth, proliferation and autophagy. This is SH3 domain-binding protein 4 (Sh3bp4) from Mus musculus (Mouse).